Reading from the N-terminus, the 315-residue chain is Lipoyl synthase (315 aa).

The [4Fe-4S] cluster site is built by C62, C67, C73, C88, C92, C95, and S302. The 218-residue stretch at 74-291 folds into the Radical SAM core domain; it reads FNHGAATFMI…KKIALKLGFS (218 aa).

It belongs to the radical SAM superfamily. Lipoyl synthase family. The cofactor is [4Fe-4S] cluster.

The protein resides in the cytoplasm. It carries out the reaction [[Fe-S] cluster scaffold protein carrying a second [4Fe-4S](2+) cluster] + N(6)-octanoyl-L-lysyl-[protein] + 2 oxidized [2Fe-2S]-[ferredoxin] + 2 S-adenosyl-L-methionine + 4 H(+) = [[Fe-S] cluster scaffold protein] + N(6)-[(R)-dihydrolipoyl]-L-lysyl-[protein] + 4 Fe(3+) + 2 hydrogen sulfide + 2 5'-deoxyadenosine + 2 L-methionine + 2 reduced [2Fe-2S]-[ferredoxin]. It participates in protein modification; protein lipoylation via endogenous pathway; protein N(6)-(lipoyl)lysine from octanoyl-[acyl-carrier-protein]: step 2/2. In terms of biological role, catalyzes the radical-mediated insertion of two sulfur atoms into the C-6 and C-8 positions of the octanoyl moiety bound to the lipoyl domains of lipoate-dependent enzymes, thereby converting the octanoylated domains into lipoylated derivatives. The chain is Lipoyl synthase from Ruthia magnifica subsp. Calyptogena magnifica.